The sequence spans 502 residues: Cobyric acid synthase (502 aa).

The GATase cobBQ-type domain maps to 260 to 433 (ILRVAVCAIP…WHGSLESDGF (174 aa)). The active-site Nucleophile is Cys341. His425 is a catalytic residue.

The protein belongs to the CobB/CobQ family. CobQ subfamily.

Its pathway is cofactor biosynthesis; adenosylcobalamin biosynthesis. In terms of biological role, catalyzes amidations at positions B, D, E, and G on adenosylcobyrinic A,C-diamide. NH(2) groups are provided by glutamine, and one molecule of ATP is hydrogenolyzed for each amidation. This is Cobyric acid synthase from Streptomyces avermitilis (strain ATCC 31267 / DSM 46492 / JCM 5070 / NBRC 14893 / NCIMB 12804 / NRRL 8165 / MA-4680).